Consider the following 939-residue polypeptide: Translation initiation factor IF-2 (939 aa).

Disordered regions lie at residues 51-81 (LGTKESGQDTGQATNEAAAAHRPTTVIGGKK) and 137-353 (VTNK…EMKA). The segment covering 181–210 (NEKKAGAPEIKRAEHTETVEKSKTAVDSKK) has biased composition (basic and acidic residues). Residues 259 to 277 (PVNRSPRPSTPSPNRSAGG) show a composition bias toward low complexity. Over residues 300 to 312 (RRDEKPAERDSRP) the composition is skewed to basic and acidic residues. The region spanning 437 to 606 (GRCPVVTVMG…QLAAEMLELK (170 aa)) is the tr-type G domain. Positions 446-453 (GHVDHGKT) are G1. Residue 446 to 453 (GHVDHGKT) participates in GTP binding. A G2 region spans residues 471–475 (GITQH). Residues 492–495 (DTPG) are G3. Residues 492 to 496 (DTPGH) and 546 to 549 (NKID) each bind GTP. The interval 546-549 (NKID) is G4. A G5 region spans residues 582 to 584 (SAK).

This sequence belongs to the TRAFAC class translation factor GTPase superfamily. Classic translation factor GTPase family. IF-2 subfamily.

It is found in the cytoplasm. Functionally, one of the essential components for the initiation of protein synthesis. Protects formylmethionyl-tRNA from spontaneous hydrolysis and promotes its binding to the 30S ribosomal subunits. Also involved in the hydrolysis of GTP during the formation of the 70S ribosomal complex. In Desulfotalea psychrophila (strain LSv54 / DSM 12343), this protein is Translation initiation factor IF-2.